The primary structure comprises 2058 residues: Protein Daple (2058 aa).

A Calponin-homology (CH) domain is found at 11 to 131; the sequence is HFLESPLVTW…KILLLMLGCA (121 aa). 5 coiled-coil regions span residues 195–221, 247–428, 455–1016, 1043–1082, and 1108–1388; these read HLKRLIDERDECKEVIVDLTQERDYLQ, EDKK…SMNE, ELNE…LRGA, ELLKFKDRTIELERNNAALQAEKKLFREQLQHLESHNLNL, and ANLQ…KFYD. Disordered regions lie at residues 1406 to 1444, 1480 to 1592, 1617 to 1655, 1696 to 1724, 1831 to 1857, 1940 to 1959, and 1988 to 2051; these read LIKPKKEPSRESVKSPTDVQSKTMDNAEMAASPSSMRPL, HRMS…EDMI, TKNRESPVNRNSLHLYDYPEKKNSSRTPTRPRPGSPGSE, LHPSSQSPSPTLHLKDPSQTAVPKSLPSA, YSATSSSQSPEPQALSPHGAMGSRGNS, LALPKEETTPPQPAPSASSL, and PVRP…PQTV. The segment covering 1409–1418 has biased composition (basic and acidic residues); that stretch reads PKKEPSRESV. Positions 1419-1429 are enriched in polar residues; that stretch reads KSPTDVQSKTM. Over residues 1494–1506 the composition is skewed to basic and acidic residues; it reads GPEHLSRSRRMES. Over residues 1552 to 1577 the composition is skewed to polar residues; the sequence is NAGSSRVPWTSSLEVSRSASNSSSPL. 2 short sequence motifs (GBA) span residues 1653 to 1675 and 1676 to 1697; these read GSEMVTLEEFLQESSRQSPPSRR and HSLNDSELITLHQFLFEAETLH. The span at 1831–1841 shows a compositional bias: polar residues; that stretch reads YSATSSSQSPE. A compositionally biased stretch (low complexity) spans 2039–2048; the sequence is PASPDPSADP. Positions 2055–2058 match the PDZ-binding motif; sequence YGCV.

This sequence belongs to the CCDC88 family. Interacts with dvl2/dsh via the PDZ-binding motif. In terms of tissue distribution, expressed weakly in gastrulae, with slightly stronger expression in the dorsal region. In neurulae, expressed in the neural plate with strong expression in the presumptive mesencephalic region. At the tailbud stage, expressed in somatic cells and in part of the tail. Also strongly expressed in regions of the head including eye vesicles, otic vesicles, olfactory placode and the pharyngeal cavity.

Its subcellular location is the cytoplasm. The protein resides in the cell junction. Positive regulator of Wnt signaling, acting synergistically with dvl2/dsh. Functions upstream of ctnnb1/beta-catenin in the canonical Wnt pathway, and also activates jnk in the Wnt/planar cell polarity (PCP) pathway. Acts as a non-receptor guanine nucleotide exchange factor which binds to and activates guanine nucleotide-binding protein G(i) alpha subunits. This promotes apical cell constriction and subsequent bending of the neural plate during neurulation via arhgef18. The sequence is that of Protein Daple (ccdc88c) from Xenopus laevis (African clawed frog).